We begin with the raw amino-acid sequence, 349 residues long: Protein Wnt-7b (349 aa).

A signal peptide spans 1–24; the sequence is MHRNFRKWIFYVFLCFGVIYVKLG. Cystine bridges form between Cys73–Cys84, Cys123–Cys131, Cys133–Cys152, Cys200–Cys214, and Cys202–Cys209. Residues Asn83 and Asn127 are each glycosylated (N-linked (GlcNAc...) asparagine). Ser206 carries the O-palmitoleoyl serine; by PORCN lipid modification. Residues 238–266 form a disordered linker region; the sequence is VEVVRASRLRQPTFLKIKQIKSYQKPMET. Cystine bridges form between Cys278–Cys309, Cys294–Cys304, Cys308–Cys348, Cys324–Cys339, Cys326–Cys336, and Cys331–Cys332. A glycan (N-linked (GlcNAc...) asparagine) is linked at Asn295.

It belongs to the Wnt family. Palmitoleoylation is required for efficient binding to frizzled receptors. Depalmitoleoylation leads to Wnt signaling pathway inhibition. In terms of tissue distribution, expressed in differentiating lens fiber cells.

It localises to the secreted. The protein localises to the extracellular space. It is found in the extracellular matrix. In terms of biological role, ligand for members of the frizzled family of seven transmembrane receptors that functions in the canonical Wnt/beta-catenin signaling pathway. Required for normal fusion of the chorion and the allantois during placenta development. Required for central nervous system (CNS) angiogenesis and blood-brain barrier regulation. The protein is Protein Wnt-7b (WNT7B) of Gallus gallus (Chicken).